The primary structure comprises 94 residues: Scorpine-like-1 (94 aa).

Residues 1–18 (MNTKFTVLIFLGVIVVSY) form the signal peptide. The 41-residue stretch at 54-94 (EYGCMMDISWNKDCQRHCQSTEQKDGICHGMKCKCGKPRSY) folds into the BetaSPN-type CS-alpha/beta domain. Intrachain disulfides connect C57/C81, C67/C86, and C71/C88.

This sequence belongs to the long chain scorpion toxin family. Class 3 subfamily. As to expression, expressed by the venom gland.

It localises to the secreted. Functionally, has antibacterial activity. The polypeptide is Scorpine-like-1 (Urodacus yaschenkoi (Inland robust scorpion)).